Consider the following 357-residue polypeptide: Peptide chain release factor 1 (357 aa).

The residue at position 236 (glutamine 236) is an N5-methylglutamine.

Belongs to the prokaryotic/mitochondrial release factor family. In terms of processing, methylated by PrmC. Methylation increases the termination efficiency of RF1.

The protein resides in the cytoplasm. Its function is as follows. Peptide chain release factor 1 directs the termination of translation in response to the peptide chain termination codons UAG and UAA. This chain is Peptide chain release factor 1, found in Mycobacterium ulcerans (strain Agy99).